The chain runs to 608 residues: Dihydroxy-acid dehydratase, chloroplastic (608 aa).

The transit peptide at methionine 1 to cysteine 34 directs the protein to the chloroplast. Residue serine 35 is modified to N-acetylserine. Cysteine 100 contributes to the [2Fe-2S] cluster binding site. Aspartate 132 contributes to the Mg(2+) binding site. Cysteine 173 is a [2Fe-2S] cluster binding site. A Mg(2+)-binding site is contributed by aspartate 174. Cysteine 245 contacts [2Fe-2S] cluster. Glutamate 497 provides a ligand contact to Mg(2+). Serine 523 acts as the Proton acceptor in catalysis.

It belongs to the IlvD/Edd family. [2Fe-2S] cluster is required as a cofactor. Requires Mg(2+) as cofactor.

The protein localises to the plastid. It is found in the chloroplast. The enzyme catalyses (2R)-2,3-dihydroxy-3-methylbutanoate = 3-methyl-2-oxobutanoate + H2O. It carries out the reaction (2R,3R)-2,3-dihydroxy-3-methylpentanoate = (S)-3-methyl-2-oxopentanoate + H2O. It participates in amino-acid biosynthesis; L-isoleucine biosynthesis; L-isoleucine from 2-oxobutanoate: step 3/4. The protein operates within amino-acid biosynthesis; L-valine biosynthesis; L-valine from pyruvate: step 3/4. With respect to regulation, is highly competitively inhibited by the fungal sesquiterpenoid aspterric acid, which is effective as a herbicide in spray applications. In terms of biological role, functions in the biosynthesis of branched-chain amino acids. Catalyzes the dehydration of (2R,3R)-2,3-dihydroxy-3-methylpentanoate (2,3-dihydroxy-3-methylvalerate) into 2-oxo-3-methylpentanoate (2-oxo-3-methylvalerate) and of (2R)-2,3-dihydroxy-3-methylbutanoate (2,3-dihydroxyisovalerate) into 2-oxo-3-methylbutanoate (2-oxoisovalerate), the penultimate precursor to L-isoleucine and L-valine, respectively. This is Dihydroxy-acid dehydratase, chloroplastic from Arabidopsis thaliana (Mouse-ear cress).